Reading from the N-terminus, the 119-residue chain is MVLTNSKQPRKQRKALYNAPLHLRNSVMAAMLSKELKEKFNKNSLPVKKGDTVKVLRGNFKGIEGEVSKVDYAGYKIIVEGVVNKKQDGTETAYPIHPSNVMITKLDESDEKRFKNSSN.

The protein belongs to the universal ribosomal protein uL24 family. Part of the 50S ribosomal subunit.

Functionally, one of two assembly initiator proteins, it binds directly to the 5'-end of the 23S rRNA, where it nucleates assembly of the 50S subunit. Located at the polypeptide exit tunnel on the outside of the subunit. The protein is Large ribosomal subunit protein uL24 of Methanococcus maripaludis (strain C5 / ATCC BAA-1333).